Reading from the N-terminus, the 395-residue chain is Probable L-tyrosine/L-aspartate decarboxylase (395 aa).

Lys242 bears the N6-(pyridoxal phosphate)lysine mark.

The protein belongs to the group II decarboxylase family. MfnA subfamily. Requires pyridoxal 5'-phosphate as cofactor.

The catalysed reaction is L-tyrosine + H(+) = tyramine + CO2. It carries out the reaction L-aspartate + H(+) = beta-alanine + CO2. It functions in the pathway cofactor biosynthesis; methanofuran biosynthesis. It participates in cofactor biosynthesis; coenzyme A biosynthesis. Its function is as follows. Catalyzes the decarboxylation of L-tyrosine to produce tyramine for methanofuran biosynthesis. Can also catalyze the decarboxylation of L-aspartate to produce beta-alanine for coenzyme A (CoA) biosynthesis. The sequence is that of Probable L-tyrosine/L-aspartate decarboxylase from Methanosarcina barkeri (strain Fusaro / DSM 804).